A 358-amino-acid chain; its full sequence is Probable tartrate dehydrogenase/decarboxylase TtuC' (358 aa).

Asp-222, Asp-246, and Asp-250 together coordinate Mn(2+).

The protein belongs to the isocitrate and isopropylmalate dehydrogenases family. Requires Mg(2+) as cofactor. Mn(2+) serves as cofactor. It depends on K(+) as a cofactor.

It localises to the cytoplasm. It carries out the reaction tartrate + NAD(+) = 2-hydroxy-3-oxosuccinate + NADH + H(+). It catalyses the reaction (2R,3S)-tartrate + NAD(+) = 2-hydroxy-3-oxosuccinate + NADH + H(+). The catalysed reaction is (2R,3R)-tartrate + NAD(+) = 2-hydroxy-3-oxosuccinate + NADH + H(+). The enzyme catalyses (2R,3R)-tartrate + H(+) = (R)-glycerate + CO2. It carries out the reaction (R)-malate + NAD(+) = pyruvate + CO2 + NADH. The protein operates within carbohydrate acid metabolism; tartrate degradation; 2-hydroxy-3-oxosuccinate from L-tartrate: step 1/1. It participates in carbohydrate acid metabolism; tartrate degradation; 2-hydroxy-3-oxosuccinate from meso-tartrate: step 1/1. It functions in the pathway carbohydrate acid metabolism; tartrate degradation; D-glycerate from L-tartrate: step 1/1. In terms of biological role, has multiple catalytic activities. Apart from catalyzing the oxidation of (+)-tartrate to oxaloglycolate, also converts meso-tartrate to D-glycerate and catalyzes the oxidative decarboxylation of D-malate to pyruvate. The sequence is that of Probable tartrate dehydrogenase/decarboxylase TtuC' (ttuC') from Agrobacterium vitis (Rhizobium vitis).